The primary structure comprises 214 residues: Probable nicotinate-nucleotide adenylyltransferase (214 aa).

This sequence belongs to the NadD family.

The catalysed reaction is nicotinate beta-D-ribonucleotide + ATP + H(+) = deamido-NAD(+) + diphosphate. It participates in cofactor biosynthesis; NAD(+) biosynthesis; deamido-NAD(+) from nicotinate D-ribonucleotide: step 1/1. Catalyzes the reversible adenylation of nicotinate mononucleotide (NaMN) to nicotinic acid adenine dinucleotide (NaAD). This chain is Probable nicotinate-nucleotide adenylyltransferase, found in Pseudomonas aeruginosa (strain UCBPP-PA14).